A 149-amino-acid chain; its full sequence is 3-hydroxyacyl-[acyl-carrier-protein] dehydratase FabZ (149 aa).

The active site involves His50.

It belongs to the thioester dehydratase family. FabZ subfamily.

The protein localises to the cytoplasm. It catalyses the reaction a (3R)-hydroxyacyl-[ACP] = a (2E)-enoyl-[ACP] + H2O. In terms of biological role, involved in unsaturated fatty acids biosynthesis. Catalyzes the dehydration of short chain beta-hydroxyacyl-ACPs and long chain saturated and unsaturated beta-hydroxyacyl-ACPs. The chain is 3-hydroxyacyl-[acyl-carrier-protein] dehydratase FabZ from Pediococcus pentosaceus (strain ATCC 25745 / CCUG 21536 / LMG 10740 / 183-1w).